The sequence spans 365 residues: Probable caffeine synthase 2 (365 aa).

Tyr-19 is an S-adenosyl-L-homocysteine binding site. Thr-26 is a binding site for caffeine. S-adenosyl-L-homocysteine contacts are provided by Cys-62, Asp-99, Leu-100, Ser-134, and Phe-135. Caffeine is bound by residues Tyr-152, His-155, and Trp-156. A Mg(2+)-binding site is contributed by Asn-173. Residue Arg-221 participates in caffeine binding. Residues Asp-259, Phe-261, and Asn-262 each contribute to the Mg(2+) site. Phe-317 contributes to the caffeine binding site.

It belongs to the methyltransferase superfamily. Type-7 methyltransferase family. Requires Mg(2+) as cofactor.

The enzyme catalyses 7-methylxanthine + S-adenosyl-L-methionine = theobromine + S-adenosyl-L-homocysteine + H(+). The catalysed reaction is theobromine + S-adenosyl-L-methionine = caffeine + S-adenosyl-L-homocysteine + H(+). It catalyses the reaction 1,7-dimethylxanthine + S-adenosyl-L-methionine = caffeine + S-adenosyl-L-homocysteine + H(+). The protein operates within alkaloid biosynthesis. May be involved in the biosynthesis of caffeine. Catalyzes the conversion of 7-methylxanthine (7mX) to theobromine and of theobromine to caffeine. Has 1-N-methylation activity. This chain is Probable caffeine synthase 2, found in Camellia sinensis (Tea plant).